Reading from the N-terminus, the 69-residue chain is Cytochrome c oxidase subunit 8A, mitochondrial (69 aa).

The transit peptide at 1-25 directs the protein to the mitochondrion; that stretch reads MSVLTSLLLRGLTGSARRLPVPRAK. Residues 2–19 carry the SIFI-degron motif; sequence SVLTSLLLRGLTGSARRL. Residues 26 to 36 lie on the Mitochondrial matrix side of the membrane; sequence VHSMPPEEELG. Residues 37–60 traverse the membrane as a helical segment; that stretch reads TLEKAIALTSCFVSLFLPAGWILS. Residues 61–69 lie on the Mitochondrial intermembrane side of the membrane; the sequence is HLEDYKRPE.

The protein belongs to the cytochrome c oxidase VIII family. As to quaternary structure, component of the cytochrome c oxidase (complex IV, CIV), a multisubunit enzyme composed of 14 subunits. The complex is composed of a catalytic core of 3 subunits MT-CO1, MT-CO2 and MT-CO3, encoded in the mitochondrial DNA, and 11 supernumerary subunits COX4I, COX5A, COX5B, COX6A, COX6B, COX6C, COX7A, COX7B, COX7C, COX8 and NDUFA4, which are encoded in the nuclear genome. The complex exists as a monomer or a dimer and forms supercomplexes (SCs) in the inner mitochondrial membrane with NADH-ubiquinone oxidoreductase (complex I, CI) and ubiquinol-cytochrome c oxidoreductase (cytochrome b-c1 complex, complex III, CIII), resulting in different assemblies (supercomplex SCI(1)III(2)IV(1) and megacomplex MCI(2)III(2)IV(2)). In terms of processing, in response to mitochondrial stress, the precursor protein is ubiquitinated by the SIFI complex in the cytoplasm before mitochondrial import, leading to its degradation. Within the SIFI complex, UBR4 initiates ubiquitin chain that are further elongated or branched by KCMF1.

Its subcellular location is the mitochondrion inner membrane. Its pathway is energy metabolism; oxidative phosphorylation. Its function is as follows. Component of the cytochrome c oxidase, the last enzyme in the mitochondrial electron transport chain which drives oxidative phosphorylation. The respiratory chain contains 3 multisubunit complexes succinate dehydrogenase (complex II, CII), ubiquinol-cytochrome c oxidoreductase (cytochrome b-c1 complex, complex III, CIII) and cytochrome c oxidase (complex IV, CIV), that cooperate to transfer electrons derived from NADH and succinate to molecular oxygen, creating an electrochemical gradient over the inner membrane that drives transmembrane transport and the ATP synthase. Cytochrome c oxidase is the component of the respiratory chain that catalyzes the reduction of oxygen to water. Electrons originating from reduced cytochrome c in the intermembrane space (IMS) are transferred via the dinuclear copper A center (CU(A)) of subunit 2 and heme A of subunit 1 to the active site in subunit 1, a binuclear center (BNC) formed by heme A3 and copper B (CU(B)). The BNC reduces molecular oxygen to 2 water molecules using 4 electrons from cytochrome c in the IMS and 4 protons from the mitochondrial matrix. The sequence is that of Cytochrome c oxidase subunit 8A, mitochondrial (COX8A) from Papio anubis (Olive baboon).